We begin with the raw amino-acid sequence, 324 residues long: Phospho-N-acetylmuramoyl-pentapeptide-transferase (324 aa).

10 consecutive transmembrane segments (helical) span residues 9 to 29, 53 to 73, 77 to 97, 117 to 137, 147 to 167, 176 to 196, 201 to 221, 227 to 247, 253 to 273, and 304 to 324; these read TFAVAFIITVIGVPLFIPFLV, TMGAVVFITAMLISFLIFSFI, VSAATWLLFIALALFGALGFL, FLGQVAISILFYLVYHLNGFA, IEVDLGWFFVIFILFWLVGFS, LDGLVSGLSVIAFSAFGVIAF, MDVAIFCFAIVGGMLGFLLFN, IFMGDTGSLALGGSIAAISIL, LLLLIGIIFVIETASVILQVF, and VLTFWGIGLIGAIISVCVVIF.

This sequence belongs to the glycosyltransferase 4 family. MraY subfamily. Requires Mg(2+) as cofactor.

Its subcellular location is the cell membrane. It carries out the reaction UDP-N-acetyl-alpha-D-muramoyl-L-alanyl-gamma-D-glutamyl-meso-2,6-diaminopimeloyl-D-alanyl-D-alanine + di-trans,octa-cis-undecaprenyl phosphate = di-trans,octa-cis-undecaprenyl diphospho-N-acetyl-alpha-D-muramoyl-L-alanyl-D-glutamyl-meso-2,6-diaminopimeloyl-D-alanyl-D-alanine + UMP. The protein operates within cell wall biogenesis; peptidoglycan biosynthesis. In terms of biological role, catalyzes the initial step of the lipid cycle reactions in the biosynthesis of the cell wall peptidoglycan: transfers peptidoglycan precursor phospho-MurNAc-pentapeptide from UDP-MurNAc-pentapeptide onto the lipid carrier undecaprenyl phosphate, yielding undecaprenyl-pyrophosphoryl-MurNAc-pentapeptide, known as lipid I. This chain is Phospho-N-acetylmuramoyl-pentapeptide-transferase, found in Listeria monocytogenes serotype 4b (strain CLIP80459).